The sequence spans 411 residues: S-adenosylmethionine synthase (411 aa).

Position 15 (H15) interacts with ATP. D17 contributes to the Mg(2+) binding site. E43 is a K(+) binding site. L-methionine is bound by residues E56 and Q99. The segment at 99 to 109 (QSPDIAQGVDT) is flexible loop. Residues 174–176 (DGK), 247–248 (RF), D256, 262–263 (RK), A279, and K283 contribute to the ATP site. D256 contacts L-methionine. K287 contacts L-methionine.

The protein belongs to the AdoMet synthase family. Homotetramer; dimer of dimers. The cofactor is Mg(2+). It depends on K(+) as a cofactor.

It is found in the cytoplasm. It catalyses the reaction L-methionine + ATP + H2O = S-adenosyl-L-methionine + phosphate + diphosphate. It participates in amino-acid biosynthesis; S-adenosyl-L-methionine biosynthesis; S-adenosyl-L-methionine from L-methionine: step 1/1. Catalyzes the formation of S-adenosylmethionine (AdoMet) from methionine and ATP. The overall synthetic reaction is composed of two sequential steps, AdoMet formation and the subsequent tripolyphosphate hydrolysis which occurs prior to release of AdoMet from the enzyme. This is S-adenosylmethionine synthase from Streptomyces spectabilis.